Consider the following 457-residue polypeptide: MTKKVYIKTFGCQMNEYDSDKMVDVLNAAEGLEKTDTPEDADIILFNTCSVREKAQEKVFSDLGRVRELKEAKPGLLIGVGGCVASQEGASIVSRAPYVDLVFGPQTLHRLPQMIDQRRASGRAQVDISFPEIEKFDHLPPARVEGPSAFVSIMEGCSKYCSYCVVPYTRGDEVSRPLDDVLTEVAGLADQGVREVTLLGQNVNAYRGALTAGSTEIADFATLIEYVADIPGIERIRYTTSHPKEFTQRLIDTYAKVPKLVSHLHLPVQHGSDRILMAMKRGYTVLEYKSVIRKLRAIRPDLSLSTDMIVGFPGETEEDFDKMMALVHEMSYDTSFSFIYSPRPGTPAANLHDDTPREVKLKRLQHLQATIEENVARISRSMVGKVERILVEGPSRKDPNELSGRTENNRVVNFPAPLASHPRLIGQMIDVKINHAYPHSLRGELLLVSDDASAATH.

Positions 3-120 (KKVYIKTFGC…LPQMIDQRRA (118 aa)) constitute an MTTase N-terminal domain. [4Fe-4S] cluster contacts are provided by C12, C49, C83, C157, C161, and C164. Positions 143-377 (RVEGPSAFVS…QATIEENVAR (235 aa)) constitute a Radical SAM core domain. Positions 380–447 (RSMVGKVERI…PHSLRGELLL (68 aa)) constitute a TRAM domain.

The protein belongs to the methylthiotransferase family. MiaB subfamily. In terms of assembly, monomer. [4Fe-4S] cluster serves as cofactor.

The protein resides in the cytoplasm. It carries out the reaction N(6)-dimethylallyladenosine(37) in tRNA + (sulfur carrier)-SH + AH2 + 2 S-adenosyl-L-methionine = 2-methylsulfanyl-N(6)-dimethylallyladenosine(37) in tRNA + (sulfur carrier)-H + 5'-deoxyadenosine + L-methionine + A + S-adenosyl-L-homocysteine + 2 H(+). Functionally, catalyzes the methylthiolation of N6-(dimethylallyl)adenosine (i(6)A), leading to the formation of 2-methylthio-N6-(dimethylallyl)adenosine (ms(2)i(6)A) at position 37 in tRNAs that read codons beginning with uridine. This is tRNA-2-methylthio-N(6)-dimethylallyladenosine synthase from Burkholderia ambifaria (strain MC40-6).